A 229-amino-acid polypeptide reads, in one-letter code: UPF0319 protein Sbal223_2728 (229 aa).

The first 21 residues, 1–21 (MKSLLPISSLLVLLGSASAFA), serve as a signal peptide directing secretion.

The protein belongs to the UPF0319 family.

The sequence is that of UPF0319 protein Sbal223_2728 from Shewanella baltica (strain OS223).